The chain runs to 1007 residues: Serine/threonine-protein kinase PRP4 homolog (1007 aa).

Over residues 1–10 (MAAAETQSLR) the composition is skewed to polar residues. The tract at residues 1 to 99 (MAAAETQSLR…EGMSPAKRTK (99 aa)) is disordered. Residue Ala-2 is modified to N-acetylalanine. 4 positions are modified to phosphoserine: Ser-8, Ser-20, Ser-23, and Ser-32. Basic residues-rich tracts occupy residues 39 to 59 (KHSR…KHKH) and 67 to 81 (KKHK…HKRK). Basic and acidic residues predominate over residues 82 to 91 (EVIDASDKEG). Phosphoserine is present on residues Ser-87 and Ser-93. At Lys-99 the chain carries N6-acetyllysine; alternate. A Glycyl lysine isopeptide (Lys-Gly) (interchain with G-Cter in SUMO2); alternate cross-link involves residue Lys-99. Residue Lys-111 forms a Glycyl lysine isopeptide (Lys-Gly) (interchain with G-Cter in SUMO2) linkage. A Glycyl lysine isopeptide (Lys-Gly) (interchain with G-Cter in SUMO2); alternate cross-link involves residue Lys-117. A Glycyl lysine isopeptide (Lys-Gly) (interchain with G-Cter in SUMO1); alternate cross-link involves residue Lys-117. Ser-131 carries the phosphoserine modification. A Phosphotyrosine modification is found at Tyr-140. 2 disordered regions span residues 140–533 (YESG…EEED) and 559–583 (SNMS…SPDD). Ser-142, Ser-144, and Ser-166 each carry phosphoserine. Low complexity predominate over residues 157 to 168 (GNRSSTRSSSTK). Glycyl lysine isopeptide (Lys-Gly) (interchain with G-Cter in SUMO2) cross-links involve residues Lys-170 and Lys-177. Basic residues-rich tracts occupy residues 179 to 202 (TTKK…KKSK) and 214 to 230 (RSKS…SKRS). 7 positions are modified to phosphoserine: Ser-239, Ser-241, Ser-257, Ser-277, Ser-283, Ser-292, and Ser-294. Residues 247–270 (RSQEKIGKARSPTDDKVKIEDKSK) show a composition bias toward basic and acidic residues. The segment covering 302-315 (SKDRRSRSKERKSK) has biased composition (basic residues). Basic and acidic residues predominate over residues 316–325 (RSETDKEKKP). A phosphoserine mark is found at Ser-328, Ser-354, Ser-356, Ser-366, and Ser-368. The segment covering 342–367 (PSRRPGRSPKRRSLSPKPRDKSRRSR) has biased composition (basic residues). Position 385 is a phosphothreonine (Thr-385). Ser-387 is modified (phosphoserine). 2 stretches are compositionally biased toward basic and acidic residues: residues 395–408 (RSLE…ERRR) and 415–429 (RPRD…RSKD). Ser-427, Ser-431, and Ser-437 each carry phosphoserine. Residues 438–497 (PTRRRSRSPIRRRSRSPLRRSRSPRRRSRSPRRRDRGRRSRSRLRRRSRSRGGRRRRSRS) show a composition bias toward basic residues. 7 positions are modified to phosphoserine: Ser-518, Ser-519, Ser-520, Ser-565, Ser-569, Ser-578, and Ser-580. The span at 518 to 533 (SSSDDNLEDFDVEEED) shows a compositional bias: acidic residues. Over residues 562–581 (SVPSEPSSPQSSTRTRSPSP) the composition is skewed to low complexity. Residues Lys-593 and Lys-659 each participate in a glycyl lysine isopeptide (Lys-Gly) (interchain with G-Cter in SUMO2) cross-link. The Protein kinase domain maps to 687-1003 (YNVYGYTGQG…INQALQHAFI (317 aa)). ATP contacts are provided by residues 693-701 (TGQGVFSNV) and Lys-717. An N6-acetyllysine modification is found at Lys-717. Catalysis depends on Asp-815, which acts as the Proton acceptor. The residue at position 849 (Tyr-849) is a Phosphotyrosine. Ser-852 is subject to Phosphoserine.

It belongs to the protein kinase superfamily. CMGC Ser/Thr protein kinase family. As to quaternary structure, interacts with CLK1 C-terminus. Associates with the U5 snRNP and NCOR1 deacetylase complexes. Identified in the spliceosome C complex. In terms of processing, phosphorylated by CLK1. Autophosphorylated; phosphorylation inhibits interaction with its targets, such as PRPF6 or SMARCA4.

It localises to the nucleus. Its subcellular location is the chromosome. The protein resides in the centromere. The protein localises to the kinetochore. The enzyme catalyses L-seryl-[protein] + ATP = O-phospho-L-seryl-[protein] + ADP + H(+). It catalyses the reaction L-threonyl-[protein] + ATP = O-phospho-L-threonyl-[protein] + ADP + H(+). Serine/threonine kinase involved in spliceosomal assembly as well as mitosis and signaling regulation. Connects chromatin mediated regulation of transcription and pre-mRNA splicing. During spliceosomal assembly, interacts with and phosphorylates PRPF6 and PRPF31, components of the U4/U6-U5 tri-small nuclear ribonucleoprotein (snRNP), to facilitate the formation of the spliceosome B complex. Plays a role in regulating transcription and the spindle assembly checkpoint (SAC). Associates with U5 snRNP and NCOR1 deacetylase complexes which may allow a coordination of pre-mRNA splicing with chromatin remodeling events involved in transcriptional regulation. Associates and probably phosphorylates SMARCA4 and NCOR1. Phosphorylates SRSF1. Associates with kinetochores during mitosis and is necessary for recruitment and maintenance of the checkpoint proteins such as MAD1L1 and MAD12L1 at the kinetochores. Phosphorylates and regulates the activity of the transcription factors such as ELK1 and KLF13. Phosphorylates nuclear YAP1 and WWTR1/TAZ which induces nuclear exclusion and regulates Hippo signaling pathway, involved in tissue growth control. The polypeptide is Serine/threonine-protein kinase PRP4 homolog (PRP4K) (Pongo abelii (Sumatran orangutan)).